The primary structure comprises 626 residues: Chaperone protein DnaK (626 aa).

Residue T197 is modified to Phosphothreonine; by autocatalysis. Positions Q595 to K614 are enriched in low complexity. Residues Q595–E626 are disordered.

The protein belongs to the heat shock protein 70 family.

Functionally, acts as a chaperone. The protein is Chaperone protein DnaK of Nautilia profundicola (strain ATCC BAA-1463 / DSM 18972 / AmH).